The chain runs to 23 residues: uncharacterized protein (23 aa).

Residues 3–23 (YFFMGISFMVIVWAGTFALMI) traverse the membrane as a helical segment.

The protein localises to the cell inner membrane. This is an uncharacterized protein from Escherichia coli (strain K12).